A 180-amino-acid chain; its full sequence is Bifunctional protein PyrR (180 aa).

Residues 101 to 113 (VILIDDVLFTGRT) carry the PRPP-binding motif.

Belongs to the purine/pyrimidine phosphoribosyltransferase family. PyrR subfamily. In terms of assembly, homodimer and homohexamer; in equilibrium.

It carries out the reaction UMP + diphosphate = 5-phospho-alpha-D-ribose 1-diphosphate + uracil. Functionally, regulates transcriptional attenuation of the pyrimidine nucleotide (pyr) operon by binding in a uridine-dependent manner to specific sites on pyr mRNA. This disrupts an antiterminator hairpin in the RNA and favors formation of a downstream transcription terminator, leading to a reduced expression of downstream genes. Also displays a weak uracil phosphoribosyltransferase activity which is not physiologically significant. The polypeptide is Bifunctional protein PyrR (Oceanobacillus iheyensis (strain DSM 14371 / CIP 107618 / JCM 11309 / KCTC 3954 / HTE831)).